The primary structure comprises 141 residues: Large ribosomal subunit protein uL16 (141 aa).

It belongs to the universal ribosomal protein uL16 family. Part of the 50S ribosomal subunit.

Its function is as follows. Binds 23S rRNA and is also seen to make contacts with the A and possibly P site tRNAs. In Campylobacter fetus subsp. fetus (strain 82-40), this protein is Large ribosomal subunit protein uL16.